Consider the following 295-residue polypeptide: Pyridoxal 5'-phosphate synthase subunit PdxS (295 aa).

Asp23 contacts D-ribose 5-phosphate. Lys80 serves as the catalytic Schiff-base intermediate with D-ribose 5-phosphate. Residue Gly152 coordinates D-ribose 5-phosphate. Arg164 provides a ligand contact to D-glyceraldehyde 3-phosphate. D-ribose 5-phosphate-binding positions include Gly213 and 234 to 235 (GS).

This sequence belongs to the PdxS/SNZ family. In the presence of PdxT, forms a dodecamer of heterodimers.

The enzyme catalyses aldehydo-D-ribose 5-phosphate + D-glyceraldehyde 3-phosphate + L-glutamine = pyridoxal 5'-phosphate + L-glutamate + phosphate + 3 H2O + H(+). It functions in the pathway cofactor biosynthesis; pyridoxal 5'-phosphate biosynthesis. Catalyzes the formation of pyridoxal 5'-phosphate from ribose 5-phosphate (RBP), glyceraldehyde 3-phosphate (G3P) and ammonia. The ammonia is provided by the PdxT subunit. Can also use ribulose 5-phosphate and dihydroxyacetone phosphate as substrates, resulting from enzyme-catalyzed isomerization of RBP and G3P, respectively. The polypeptide is Pyridoxal 5'-phosphate synthase subunit PdxS (Methanosphaera stadtmanae (strain ATCC 43021 / DSM 3091 / JCM 11832 / MCB-3)).